A 120-amino-acid chain; its full sequence is NAD(P)H-quinone oxidoreductase subunit 3 (120 aa).

3 helical membrane passes run 6-26 (GYDA…LALV), 64-84 (MFAL…PWAV), and 89-109 (LGLL…VALA).

Belongs to the complex I subunit 3 family. NDH-1 can be composed of about 15 different subunits; different subcomplexes with different compositions have been identified which probably have different functions.

It is found in the cellular thylakoid membrane. It carries out the reaction a plastoquinone + NADH + (n+1) H(+)(in) = a plastoquinol + NAD(+) + n H(+)(out). It catalyses the reaction a plastoquinone + NADPH + (n+1) H(+)(in) = a plastoquinol + NADP(+) + n H(+)(out). NDH-1 shuttles electrons from an unknown electron donor, via FMN and iron-sulfur (Fe-S) centers, to quinones in the respiratory and/or the photosynthetic chain. The immediate electron acceptor for the enzyme in this species is believed to be plastoquinone. Couples the redox reaction to proton translocation, and thus conserves the redox energy in a proton gradient. Cyanobacterial NDH-1 also plays a role in inorganic carbon-concentration. The polypeptide is NAD(P)H-quinone oxidoreductase subunit 3 (Synechococcus sp. (strain WH7803)).